The primary structure comprises 179 residues: Small capsomere-interacting protein (179 aa).

Positions 107–179 (IPLPPETGEF…QAPGTKGKKQ (73 aa)) are disordered. Positions 118–171 (TGGTSSSVRSASGASGGAASTAASGGSASAAASGASGGSASQSDVSSRSRSQQA) are enriched in low complexity.

Belongs to the herpesviridae small capsomere-interacting protein family. As to quaternary structure, interacts with the major capsid protein/MCP.

It is found in the virion. Its subcellular location is the host nucleus. Functionally, participates in the assembly of the infectious particles by decorating the outer surface of the capsid shell and thus forming a layer between the capsid and the tegument. Complexes composed of the major capsid protein and small capsomere-interacting protein/SCP assemble together in the host cytoplasm and are translocated to the nucleus, where they accumulate and participate in capsid assembly. In Equine herpesvirus 2 (strain 86/87) (EHV-2), this protein is Small capsomere-interacting protein.